We begin with the raw amino-acid sequence, 207 residues long: Urease accessory protein UreE (207 aa).

The segment covering 170 to 194 (EHHGHSHSHSHDHDHDHDHDHDHQH) has biased composition (basic and acidic residues). The tract at residues 170–207 (EHHGHSHSHSHDHDHDHDHDHDHQHGPCCSHGHHHGHR) is disordered.

This sequence belongs to the UreE family.

It localises to the cytoplasm. Involved in urease metallocenter assembly. Binds nickel. Probably functions as a nickel donor during metallocenter assembly. This is Urease accessory protein UreE from Burkholderia pseudomallei (strain 1106a).